The chain runs to 254 residues: 3-deoxy-manno-octulosonate cytidylyltransferase (254 aa).

This sequence belongs to the KdsB family.

The protein resides in the cytoplasm. The catalysed reaction is 3-deoxy-alpha-D-manno-oct-2-ulosonate + CTP = CMP-3-deoxy-beta-D-manno-octulosonate + diphosphate. It functions in the pathway nucleotide-sugar biosynthesis; CMP-3-deoxy-D-manno-octulosonate biosynthesis; CMP-3-deoxy-D-manno-octulosonate from 3-deoxy-D-manno-octulosonate and CTP: step 1/1. It participates in bacterial outer membrane biogenesis; lipopolysaccharide biosynthesis. Activates KDO (a required 8-carbon sugar) for incorporation into bacterial lipopolysaccharide in Gram-negative bacteria. The protein is 3-deoxy-manno-octulosonate cytidylyltransferase of Haemophilus influenzae (strain 86-028NP).